Reading from the N-terminus, the 141-residue chain is Large ribosomal subunit protein bL21 (141 aa).

Residues 111–141 (ATAPSRTEAAPESNPEAAPSAAATGIPADEE) form a disordered region. The segment covering 118 to 133 (EAAPESNPEAAPSAAA) has biased composition (low complexity).

Belongs to the bacterial ribosomal protein bL21 family. As to quaternary structure, part of the 50S ribosomal subunit. Contacts protein L20.

This protein binds to 23S rRNA in the presence of protein L20. In Synechococcus sp. (strain JA-2-3B'a(2-13)) (Cyanobacteria bacterium Yellowstone B-Prime), this protein is Large ribosomal subunit protein bL21.